The sequence spans 444 residues: 3-phosphoshikimate 1-carboxyvinyltransferase (444 aa).

3 residues coordinate 3-phosphoshikimate: K24, S25, and R29. K24 contributes to the phosphoenolpyruvate binding site. Phosphoenolpyruvate-binding residues include G97 and R125. The 3-phosphoshikimate site is built by S170, Q172, D318, and K345. Residue Q172 participates in phosphoenolpyruvate binding. The active-site Proton acceptor is D318. The phosphoenolpyruvate site is built by R349 and R391.

This sequence belongs to the EPSP synthase family. Monomer.

The protein localises to the cytoplasm. The catalysed reaction is 3-phosphoshikimate + phosphoenolpyruvate = 5-O-(1-carboxyvinyl)-3-phosphoshikimate + phosphate. It functions in the pathway metabolic intermediate biosynthesis; chorismate biosynthesis; chorismate from D-erythrose 4-phosphate and phosphoenolpyruvate: step 6/7. In terms of biological role, catalyzes the transfer of the enolpyruvyl moiety of phosphoenolpyruvate (PEP) to the 5-hydroxyl of shikimate-3-phosphate (S3P) to produce enolpyruvyl shikimate-3-phosphate and inorganic phosphate. The sequence is that of 3-phosphoshikimate 1-carboxyvinyltransferase from Halorhodospira halophila (strain DSM 244 / SL1) (Ectothiorhodospira halophila (strain DSM 244 / SL1)).